Reading from the N-terminus, the 212-residue chain is uncharacterized protein (212 aa).

Positions 53, 74, and 97 each coordinate S-adenosyl-L-methionine.

It belongs to the methyltransferase superfamily. YrrT family.

Its function is as follows. Could be a S-adenosyl-L-methionine-dependent methyltransferase. This is an uncharacterized protein from Bacillus mycoides (strain KBAB4) (Bacillus weihenstephanensis).